The chain runs to 247 residues: tRNA pseudouridine synthase A (247 aa).

Catalysis depends on D52, which acts as the Nucleophile. Residue Y113 participates in substrate binding.

The protein belongs to the tRNA pseudouridine synthase TruA family. In terms of assembly, homodimer.

The enzyme catalyses uridine(38/39/40) in tRNA = pseudouridine(38/39/40) in tRNA. Its function is as follows. Formation of pseudouridine at positions 38, 39 and 40 in the anticodon stem and loop of transfer RNAs. This is tRNA pseudouridine synthase A from Rhizobium meliloti (strain 1021) (Ensifer meliloti).